We begin with the raw amino-acid sequence, 60 residues long: Large ribosomal subunit protein bL32 (60 aa).

A compositionally biased stretch (basic residues) spans Met1 to Gln23. The interval Met1–Glu60 is disordered.

Belongs to the bacterial ribosomal protein bL32 family.

In Microcystis aeruginosa (strain NIES-843 / IAM M-2473), this protein is Large ribosomal subunit protein bL32.